Reading from the N-terminus, the 140-residue chain is Nucleoside diphosphate kinase (140 aa).

ATP contacts are provided by lysine 11, phenylalanine 59, arginine 87, threonine 93, arginine 104, and asparagine 114. Catalysis depends on histidine 117, which acts as the Pros-phosphohistidine intermediate.

It belongs to the NDK family. As to quaternary structure, homotetramer. Mg(2+) serves as cofactor.

It is found in the cytoplasm. It catalyses the reaction a 2'-deoxyribonucleoside 5'-diphosphate + ATP = a 2'-deoxyribonucleoside 5'-triphosphate + ADP. The catalysed reaction is a ribonucleoside 5'-diphosphate + ATP = a ribonucleoside 5'-triphosphate + ADP. Functionally, major role in the synthesis of nucleoside triphosphates other than ATP. The ATP gamma phosphate is transferred to the NDP beta phosphate via a ping-pong mechanism, using a phosphorylated active-site intermediate. The protein is Nucleoside diphosphate kinase of Rhizobium etli (strain CIAT 652).